The sequence spans 191 residues: Transcription factor FapR (191 aa).

The protein belongs to the FapR family.

In terms of biological role, transcriptional factor involved in regulation of membrane lipid biosynthesis by repressing genes involved in fatty acid and phospholipid metabolism. This Oceanobacillus iheyensis (strain DSM 14371 / CIP 107618 / JCM 11309 / KCTC 3954 / HTE831) protein is Transcription factor FapR.